Reading from the N-terminus, the 371-residue chain is Opsin, ultraviolet-sensitive (371 aa).

Residues 1–52 (MSNDSIHWEARYLPAGPPRLLGWNVPAEELIHIPEHWLVYPEPNPSLHYLLA) lie on the Extracellular side of the membrane. N-linked (GlcNAc...) asparagine glycosylation is present at Asn-3. Residues 53-73 (LLYILFTFLALLGNGLVIWIF) form a helical membrane-spanning segment. Residues 74–84 (CAAKSLRTPSN) lie on the Cytoplasmic side of the membrane. The helical transmembrane segment at 85–105 (MFVVNLAICDFFMMIKTPIFI) threads the bilayer. Topologically, residues 106-121 (YNSFNTGFALGNLGCQ) are extracellular. Cys-120 and Cys-197 are disulfide-bonded. A helical membrane pass occupies residues 122-142 (IFAVIGSLTGIGAAITNAAIA). Residues 143–161 (YDRYSTIARPLDGKLSRGQ) lie on the Cytoplasmic side of the membrane. Residues 162–182 (VILFIVLIWTYTIPWALMPVM) form a helical membrane-spanning segment. Residues 183-209 (GVWGRFVPEGFLTSCSFDYLTDTNEIR) are Extracellular-facing. A helical transmembrane segment spans residues 210–230 (IFVATIFTFSYCIPMILIIYY). The Cytoplasmic portion of the chain corresponds to 231–278 (YSQIVSHVVNHEKALREQAKKMNVDSLRSNANTSSQSAEIRIAKAAIT). The helical transmembrane segment at 279–299 (ICFLYVLSWTPYGVMSMIGAF) threads the bilayer. Residues 300–302 (GNK) lie on the Extracellular side of the membrane. A helical transmembrane segment spans residues 303–323 (ALLTPGVTMIPACTCKAVACL). Lys-318 carries the N6-(retinylidene)lysine modification. At 324–371 (DPYVYAISHPKYRLELQKRLPWLELQEKPISDSTSTTTETVNTPPASS) the chain is on the cytoplasmic side.

This sequence belongs to the G-protein coupled receptor 1 family. Opsin subfamily. In terms of processing, phosphorylated on some or all of the serine and threonine residues present in the C-terminal region. As to expression, expressed in the dorsal region of the retina.

The protein resides in the membrane. Functionally, visual pigments are the light-absorbing molecules that mediate vision. They consist of an apoprotein, opsin, covalently linked to 11-cis-retinal. This Apis mellifera (Honeybee) protein is Opsin, ultraviolet-sensitive (UVOP).